The primary structure comprises 368 residues: Xaa-Pro dipeptidase (368 aa).

Positions 223, 234, 298, 327, and 341 each coordinate Mn(2+).

It belongs to the peptidase M24B family. Requires Mn(2+) as cofactor.

It localises to the cytoplasm. The enzyme catalyses Xaa-L-Pro dipeptide + H2O = an L-alpha-amino acid + L-proline. This chain is Xaa-Pro dipeptidase (pepQ), found in Lactobacillus helveticus (Lactobacillus suntoryeus).